A 762-amino-acid polypeptide reads, in one-letter code: Coleoptile phototropism protein 1 (762 aa).

Residues 1-12 (MWESESESHGGE) are compositionally biased toward basic and acidic residues. The disordered stretch occupies residues 1–29 (MWESESESHGGERGLVPVGGGGGSGRHEA). The 78-residue stretch at 51–128 (SDLLVKVGDV…SYGMAVDLTA (78 aa)) folds into the BTB domain. Gly residues predominate over residues 227-238 (PAAIRGGGGSGG). Disordered stretches follow at residues 227–264 (PAAI…RQAV), 460–495 (MAVA…ASAS), 687–718 (QVDG…AWSS), and 731–762 (GADA…NSIS). The 340-residue stretch at 268-607 (DWWFEDVSVL…VQVLFTEQVK (340 aa)) folds into the NPH3 domain. A coiled-coil region spans residues 654–691 (AAAKKDINTLKFELESMKAKYLELQHEMDALQKQVDGR). Over residues 696–709 (PSPAAAKIGKQQQQ) the composition is skewed to low complexity. Gly residues predominate over residues 736 to 747 (AGGGVAPPGGGE). The segment covering 752-762 (KGPRRWRNSIS) has biased composition (basic residues).

It belongs to the NPH3 family.

The protein operates within protein modification; protein ubiquitination. In terms of biological role, may act as a substrate-specific adapter of an E3 ubiquitin-protein ligase complex (CUL3-RBX1-BTB) which mediates the ubiquitination and subsequent proteasomal degradation of target proteins. Plays a role as signal transduction component in coleoptile phototropism and lateral translocation of auxin. The chain is Coleoptile phototropism protein 1 (CPT1) from Oryza sativa subsp. japonica (Rice).